We begin with the raw amino-acid sequence, 329 residues long: Transposable element Tc3 transposase (329 aa).

The DNA-binding element occupies 2 to 135 (PRGSALSDTE…LEFAKNNMGT (134 aa)).

This sequence belongs to the transposase 5 family. Homodimer or homotetramer.

The protein resides in the nucleus. Binds specifically to the terminal nucleotides of the TC3 inverted repeat. Its expression results in frequent excision and transposition of endogenous TC3 elements. TC3 transposase acts by making double strand breaks at the ends of TC3 element. The excised element would then be inserted into a target sequence. This chain is Transposable element Tc3 transposase (tc3a), found in Caenorhabditis elegans.